The chain runs to 513 residues: Protein disulfide-isomerase (513 aa).

Positions 1–23 (MAIRSKAWISLLLALAVALSARA) are cleaved as a signal peptide. A Thioredoxin 1 domain is found at 24-145 (EEEPAAAAEG…IVDYLKKQVG (122 aa)). Active-site nucleophile residues include cysteine 63 and cysteine 66. A disulfide bridge connects residues cysteine 63 and cysteine 66. Asparagine 279 carries N-linked (GlcNAc...) asparagine glycosylation. Positions 366–485 (FRNSEPIPEV…IVDFIKKSKE (120 aa)) constitute a Thioredoxin 2 domain. Catalysis depends on nucleophile residues cysteine 408 and cysteine 411. A disulfide bridge connects residues cysteine 408 and cysteine 411. The disordered stretch occupies residues 485–513 (ETAAPHHHHHPGATGIREGSRAEPVKDEL). Over residues 502–513 (EGSRAEPVKDEL) the composition is skewed to basic and acidic residues. A Prevents secretion from ER motif is present at residues 510 to 513 (KDEL).

This sequence belongs to the protein disulfide isomerase family.

It is found in the endoplasmic reticulum lumen. It catalyses the reaction Catalyzes the rearrangement of -S-S- bonds in proteins.. Its function is as follows. Participates in the folding of proteins containing disulfide bonds, may be involved in glycosylation, prolyl hydroxylation and triglyceride transfer. The protein is Protein disulfide-isomerase (PDI) of Zea mays (Maize).